A 103-amino-acid polypeptide reads, in one-letter code: UPF0145 protein BCE33L0904 (103 aa).

It belongs to the UPF0145 family.

This is UPF0145 protein BCE33L0904 from Bacillus cereus (strain ZK / E33L).